The following is a 250-amino-acid chain: UPF0494 membrane protein PB2B2.07c (250 aa).

Helical transmembrane passes span 98-118 (WPLL…NFEV), 144-164 (IAIY…MFPL), and 179-199 (MIIA…GATI).

This sequence belongs to the UPF0494 family.

It is found in the cytoplasm. The protein localises to the endoplasmic reticulum. Its subcellular location is the golgi apparatus. It localises to the membrane. The sequence is that of UPF0494 membrane protein PB2B2.07c from Schizosaccharomyces pombe (strain 972 / ATCC 24843) (Fission yeast).